Here is a 469-residue protein sequence, read N- to C-terminus: Desmin (469 aa).

The head stretch occupies residues 2 to 107; sequence SQAYSSSQRV…QEFLTTRTNE (106 aa). A Phosphoserine; by CDK1 modification is found at Ser7. The residue at position 12 (Ser12) is a Phosphoserine; by AURKB. At Arg16 the chain carries Omega-N-methylarginine. The residue at position 17 (Thr17) is a Phosphothreonine; by AURKB and ROCK1. Phosphoserine; by CDK1 is present on residues Ser28 and Ser32. At Arg37 the chain carries Asymmetric dimethylarginine; alternate. Arg37 carries the post-translational modification Omega-N-methylarginine; alternate. Phosphoserine is present on Ser45. The residue at position 58 (Arg58) is an ADP-ribosylarginine. Ser60 is subject to Phosphoserine; by AURKB. Residue Arg70 is modified to Omega-N-methylarginine. Thr76 is modified (phosphothreonine; by ROCK1). Position 81 is a phosphoserine (Ser81). The IF rod domain maps to 107-415; it reads EKVELQELND…KLLEGEESRI (309 aa). The coil 1A stretch occupies residues 108–140; that stretch reads KVELQELNDRFANYIEKVRFLEQQNAALAAEVN. The tract at residues 141-150 is linker 1; the sequence is RLKGREPTRV. Residues 151–251 are coil 1B; sequence AEIYEEELRE…HEEEIRELQA (101 aa). Residues 252–267 form a linker 12 region; sequence QLQEQQVQVEMDMSKP. Residues 267–414 are interaction with NEB; the sequence is PDLTAALRDI…RKLLEGEESR (148 aa). The tract at residues 268-286 is coil 2A; sequence DLTAALRDIRAQYETIAAK. A linker 2 region spans residues 287 to 294; that stretch reads NISEAEEW. 4 positions are modified to phosphoserine: Ser289, Ser357, Ser360, and Ser423. Residues 295–411 are coil 2B; that stretch reads YKSKVSDLTQ…ATYRKLLEGE (117 aa). The interval 412-469 is tail; sequence ESRINLPIQTYSALNFRETSPEQRGSEVHTKKTVMIKTIETRDGEVVSEATQQQHEVL. Residues 437 to 452 are interaction with CRYAB; sequence SEVHTKKTVMIKTIET.

The protein belongs to the intermediate filament family. Homomer. Interacts with DST. Interacts with MTM1. Interacts with EPPK1; interaction is dependent of higher-order structure of intermediate filament. Interacts with CRYAB. Interacts with NEB (via nebulin repeats 160-164). Interacts (via rod region) with NEBL (via nebulin repeats 1-5). Interacts with ASB2; the interaction targets DES for proteasomal degradation. Interacts with PKP1. Interacts with FLII. Post-translationally, ADP-ribosylation prevents ability to form intermediate filaments. In terms of processing, phosphorylation at Ser-7, Ser-28 and Ser-32 by CDK1, phosphorylation at Ser-60 by AURKB and phosphorylation at Thr-76 by ROCK1 contribute to efficient separation of desmin intermediate filaments during mitosis. Ubiquitination by a SCF-like complex containing ASB2 leads to proteasomal degradation.

It is found in the cytoplasm. It localises to the myofibril. Its subcellular location is the sarcomere. The protein localises to the z line. The protein resides in the cell membrane. It is found in the sarcolemma. It localises to the nucleus. Its subcellular location is the cell tip. The protein localises to the nucleus envelope. Muscle-specific type III intermediate filament essential for proper muscular structure and function. Plays a crucial role in maintaining the structure of sarcomeres, inter-connecting the Z-disks and forming the myofibrils, linking them not only to the sarcolemmal cytoskeleton, but also to the nucleus and mitochondria, thus providing strength for the muscle fiber during activity. In adult striated muscle they form a fibrous network connecting myofibrils to each other and to the plasma membrane from the periphery of the Z-line structures. May act as a sarcomeric microtubule-anchoring protein: specifically associates with detyrosinated tubulin-alpha chains, leading to buckled microtubules and mechanical resistance to contraction. Required for nuclear membrane integrity, via anchoring at the cell tip and nuclear envelope, resulting in maintenance of microtubule-derived intracellular mechanical forces. Contributes to the transcriptional regulation of the NKX2-5 gene in cardiac progenitor cells during a short period of cardiomyogenesis and in cardiac side population stem cells in the adult. Plays a role in maintaining an optimal conformation of nebulette (NEB) on heart muscle sarcomeres to bind and recruit cardiac alpha-actin. The polypeptide is Desmin (DES) (Canis lupus familiaris (Dog)).